A 243-amino-acid chain; its full sequence is Zinc import ATP-binding protein ZnuC (243 aa).

One can recognise an ABC transporter domain in the interval 4–219; sequence ITVENLSVRY…PEYRALFGTG (216 aa). 36 to 43 is a binding site for ATP; sequence GPNGSGKT.

This sequence belongs to the ABC transporter superfamily. Zinc importer (TC 3.A.1.15.5) family. As to quaternary structure, the complex is composed of two ATP-binding proteins (ZnuC), two transmembrane proteins (ZnuB) and a solute-binding protein (ZnuA).

The protein localises to the cell inner membrane. The enzyme catalyses Zn(2+)(out) + ATP(in) + H2O(in) = Zn(2+)(in) + ADP(in) + phosphate(in) + H(+)(in). Its function is as follows. Part of the ABC transporter complex ZnuABC involved in zinc import. Responsible for energy coupling to the transport system. This Jannaschia sp. (strain CCS1) protein is Zinc import ATP-binding protein ZnuC.